The primary structure comprises 409 residues: uncharacterized protein (409 aa).

In terms of domain architecture, HTH arsR-type spans 305-409; that stretch reads LTKIDEKVVK…LIGEDDELEM (105 aa).

This is an uncharacterized protein from Methanocaldococcus jannaschii (strain ATCC 43067 / DSM 2661 / JAL-1 / JCM 10045 / NBRC 100440) (Methanococcus jannaschii).